Consider the following 230-residue polypeptide: Phosphatidylserine decarboxylase proenzyme (230 aa).

Ser186 (schiff-base intermediate with substrate; via pyruvic acid) is an active-site residue. Position 186 is a pyruvic acid (Ser); by autocatalysis (Ser186).

This sequence belongs to the phosphatidylserine decarboxylase family. PSD-A subfamily. Heterodimer of a large membrane-associated beta subunit and a small pyruvoyl-containing alpha subunit. Requires pyruvate as cofactor. Is synthesized initially as an inactive proenzyme. Formation of the active enzyme involves a self-maturation process in which the active site pyruvoyl group is generated from an internal serine residue via an autocatalytic post-translational modification. Two non-identical subunits are generated from the proenzyme in this reaction, and the pyruvate is formed at the N-terminus of the alpha chain, which is derived from the carboxyl end of the proenzyme. The post-translation cleavage follows an unusual pathway, termed non-hydrolytic serinolysis, in which the side chain hydroxyl group of the serine supplies its oxygen atom to form the C-terminus of the beta chain, while the remainder of the serine residue undergoes an oxidative deamination to produce ammonia and the pyruvoyl prosthetic group on the alpha chain.

The protein resides in the cell membrane. The catalysed reaction is a 1,2-diacyl-sn-glycero-3-phospho-L-serine + H(+) = a 1,2-diacyl-sn-glycero-3-phosphoethanolamine + CO2. Its pathway is phospholipid metabolism; phosphatidylethanolamine biosynthesis; phosphatidylethanolamine from CDP-diacylglycerol: step 2/2. Functionally, catalyzes the formation of phosphatidylethanolamine (PtdEtn) from phosphatidylserine (PtdSer). The chain is Phosphatidylserine decarboxylase proenzyme from Wolbachia pipientis wMel.